Consider the following 334-residue polypeptide: L-lactate dehydrogenase B chain (334 aa).

Ala-2 is modified (N-acetylalanine). The residue at position 7 (Lys-7) is an N6-acetyllysine. A Phosphoserine modification is found at Ser-44. NAD(+)-binding positions include 53 to 58 (DVLEDK) and Arg-100. Lys-58 is subject to N6-acetyllysine. Arg-107 is a binding site for substrate. An N6-acetyllysine modification is found at Lys-119. An NAD(+)-binding site is contributed by Asn-139. Positions 139 and 170 each coordinate substrate. Residue His-194 is the Proton acceptor of the active site. Tyr-240 is modified (phosphotyrosine). Thr-249 serves as a coordination point for substrate. Lys-329 bears the N6-acetyllysine mark.

It belongs to the LDH/MDH superfamily. LDH family. As to quaternary structure, homotetramer. Interacts with PTEN upstream reading frame protein MP31; the interaction leads to inhibition of mitochondrial lactate dehydrogenase activity, preventing conversion of lactate to pyruvate in mitochondria.

The protein resides in the cytoplasm. It localises to the mitochondrion inner membrane. It carries out the reaction (S)-lactate + NAD(+) = pyruvate + NADH + H(+). The protein operates within fermentation; pyruvate fermentation to lactate; (S)-lactate from pyruvate: step 1/1. Interconverts simultaneously and stereospecifically pyruvate and lactate with concomitant interconversion of NADH and NAD(+). The polypeptide is L-lactate dehydrogenase B chain (LDHB) (Monodelphis domestica (Gray short-tailed opossum)).